The primary structure comprises 145 residues: Neutral phospholipase A2 paradoxin-like beta chain (145 aa).

The N-terminal stretch at 1–27 (MHPAHLLVLLAVCVSLLGASDIPPLPL) is a signal peptide. Cystine bridges form between Cys-38–Cys-98, Cys-54–Cys-144, Cys-56–Cys-72, Cys-71–Cys-125, Cys-78–Cys-118, Cys-87–Cys-111, and Cys-105–Cys-116.

It belongs to the phospholipase A2 family. Group I subfamily. N49 sub-subfamily. As to quaternary structure, heterotrimer of alpha, beta, and gamma chains; non-covalently linked. In terms of tissue distribution, expressed by the venom gland.

It localises to the secreted. Heterotrimer: Snake venom phospholipase A2 (PLA2) heterotrimer that acts as a potent presynaptic neurotoxin by blocking synaptic transmission and synaptic vesicle recycling. May act by binding in a calcium-dependent fashion to neurotonal pentraxin-1 (NPTX1) and neurotonal pentraxin-2 (NPTX2), but not to neuronal pentraxin receptor (NPTXR). Also binds to taipoxin-associated calcium binding protein 49 (RCN2), a protein localized in the lumen of endoplasmic reticulum. Functionally, monomer (beta chain): Snake venom phospholipase A2 homolog that is neither toxic nor enzymatically active. Does not bind calcium. This chain is Neutral phospholipase A2 paradoxin-like beta chain, found in Oxyuranus microlepidotus (Inland taipan).